The chain runs to 460 residues: Signal recognition particle 54 kDa protein (460 aa).

GTP-binding positions include 104–111, 184–188, and 242–245; these read GLQGSGKT, DTAGR, and TKLD.

The protein belongs to the GTP-binding SRP family. SRP54 subfamily. As to quaternary structure, part of the signal recognition particle protein translocation system, which is composed of SRP and FtsY. Archaeal SRP consists of a 7S RNA molecule of 300 nucleotides and two protein subunits: SRP54 and SRP19.

The protein resides in the cytoplasm. The catalysed reaction is GTP + H2O = GDP + phosphate + H(+). In terms of biological role, involved in targeting and insertion of nascent membrane proteins into the cytoplasmic membrane. Binds to the hydrophobic signal sequence of the ribosome-nascent chain (RNC) as it emerges from the ribosomes. The SRP-RNC complex is then targeted to the cytoplasmic membrane where it interacts with the SRP receptor FtsY. This Halobacterium salinarum (strain ATCC 29341 / DSM 671 / R1) protein is Signal recognition particle 54 kDa protein.